A 249-amino-acid chain; its full sequence is uncharacterized protein (249 aa).

11–34 is an NADP(+) binding site; that stretch reads IFGGRSQIGGELARRLAAGATMVL. Ser142 lines the substrate pocket. Catalysis depends on Tyr155, which acts as the Proton acceptor.

It belongs to the short-chain dehydrogenases/reductases (SDR) family.

This is an uncharacterized protein from Mycobacterium tuberculosis (strain CDC 1551 / Oshkosh).